The sequence spans 387 residues: MSVIKMTDLDLAGKRVLIRADLNVPVKEGKVTSDARIRASLPTIEAALKQGAKVMVTSHLGRPTEGEYNEEFSLLPVVNYLKEKLSSPVRLAKDYLDGVEIAAGELVVLENVRFNKGEKKDDEALSKKYAALCDVYVMDAFGTAHRAQASTHGVGKFAPIACAGPLLSAELEALGKALGNPARPMVAIVGGSKVSTKLTVLGALSKIADKLIVGGGIANTFVAAQGHNVGKSLYEADLIPEAKRLLETCDIPVPTDVRVATEFSETAAATLKPANEIKDDEQILDLGDESAERLAEILKNAKTILWNGPVGVFEFPNFRKGTEIVARAIAESEAFSIAGGGDTLAAIDLFGIADQISYISTGGGAFLEFVEGKKLPAVVMLEERAKQ.

Residues 21–23 (DLN), R36, 59–62 (HLGR), R113, and R146 contribute to the substrate site. ATP-binding positions include K197, E314, and 340–343 (GGDT).

The protein belongs to the phosphoglycerate kinase family. In terms of assembly, monomer.

Its subcellular location is the cytoplasm. It catalyses the reaction (2R)-3-phosphoglycerate + ATP = (2R)-3-phospho-glyceroyl phosphate + ADP. Its pathway is carbohydrate degradation; glycolysis; pyruvate from D-glyceraldehyde 3-phosphate: step 2/5. This Yersinia pestis bv. Antiqua (strain Antiqua) protein is Phosphoglycerate kinase.